Consider the following 60-residue polypeptide: Large ribosomal subunit protein bL32 (60 aa).

The protein belongs to the bacterial ribosomal protein bL32 family.

The sequence is that of Large ribosomal subunit protein bL32 from Ruminiclostridium cellulolyticum (strain ATCC 35319 / DSM 5812 / JCM 6584 / H10) (Clostridium cellulolyticum).